Reading from the N-terminus, the 204-residue chain is FMN-dependent NADH:quinone oxidoreductase (204 aa).

FMN is bound by residues Ser-9, 15-17 (SVS), and 97-100 (MYNF).

The protein belongs to the azoreductase type 1 family. In terms of assembly, homodimer. The cofactor is FMN.

It carries out the reaction 2 a quinone + NADH + H(+) = 2 a 1,4-benzosemiquinone + NAD(+). The catalysed reaction is N,N-dimethyl-1,4-phenylenediamine + anthranilate + 2 NAD(+) = 2-(4-dimethylaminophenyl)diazenylbenzoate + 2 NADH + 2 H(+). Its function is as follows. Quinone reductase that provides resistance to thiol-specific stress caused by electrophilic quinones. Also exhibits azoreductase activity. Catalyzes the reductive cleavage of the azo bond in aromatic azo compounds to the corresponding amines. The polypeptide is FMN-dependent NADH:quinone oxidoreductase (Methylobacterium radiotolerans (strain ATCC 27329 / DSM 1819 / JCM 2831 / NBRC 15690 / NCIMB 10815 / 0-1)).